We begin with the raw amino-acid sequence, 340 residues long: Adenosine deaminase (340 aa).

2 residues coordinate Zn(2+): histidine 15 and histidine 17. Substrate-binding residues include histidine 17, aspartate 19, and glycine 172. Histidine 199 serves as a coordination point for Zn(2+). The active-site Proton donor is the glutamate 202. Zn(2+) is bound at residue aspartate 279.

The protein belongs to the metallo-dependent hydrolases superfamily. Adenosine and AMP deaminases family. Adenosine deaminase subfamily. It depends on Zn(2+) as a cofactor.

It catalyses the reaction adenosine + H2O + H(+) = inosine + NH4(+). The catalysed reaction is 2'-deoxyadenosine + H2O + H(+) = 2'-deoxyinosine + NH4(+). Its function is as follows. Catalyzes the hydrolytic deamination of adenosine and 2-deoxyadenosine. This is Adenosine deaminase from Streptococcus agalactiae serotype Ia (strain ATCC 27591 / A909 / CDC SS700).